Consider the following 264-residue polypeptide: 1-acyl-sn-glycerol-3-phosphate acyltransferase (264 aa).

Residues 16–36 traverse the membrane as a helical segment; the sequence is MFYTYLRGLVVLLLWSINGNA. The HXXXXD motif signature appears at 57 to 62; it reads HRTWWD. Residues 233 to 253 traverse the membrane as a helical segment; sequence LILAIILAILTIIFSFIASFI.

It belongs to the 1-acyl-sn-glycerol-3-phosphate acyltransferase family.

Its subcellular location is the membrane. The enzyme catalyses a fatty acyl-[ACP] + a 1-acyl-sn-glycero-3-phosphate = a 1,2-diacyl-sn-glycero-3-phosphate + holo-[ACP]. It catalyses the reaction hexadecanoyl-[ACP] + 1-hexadecanoyl-sn-glycero-3-phosphate = 1,2-dihexadecanoyl-sn-glycero-3-phosphate + holo-[ACP]. It functions in the pathway lipid metabolism; phospholipid metabolism. In terms of biological role, converts lysophosphatidic acid (LPA) into phosphatidic acid (PA) by incorporating an acyl moiety at the 2 position. This enzyme utilizes acyl-ACP as fatty acyl donor, but not acyl-CoA. This chain is 1-acyl-sn-glycerol-3-phosphate acyltransferase (plsC), found in Streptococcus pneumoniae (strain ATCC BAA-255 / R6).